Reading from the N-terminus, the 717-residue chain is Serine/threonine-protein kinase STE11 (717 aa).

The SAM domain maps to 20 to 84; it reads NDLPFVQLFL…LRKSKSFQRD (65 aa). S323 is subject to Phosphoserine. The 298-residue stretch at 415–712 folds into the Protein kinase domain; it reads WLKGACIGSG…ALELLQHPWL (298 aa). ATP is bound by residues 421-429 and K444; that span reads IGSGSFGSV. Positions 452–466 are enriched in polar residues; the sequence is NIGVPTDNNKQANSD. Residues 452-481 are disordered; that stretch reads NIGVPTDNNKQANSDENNEQEEQQEKIEDV. Phosphoserine is present on S465. Catalysis depends on D579, which acts as the Proton acceptor.

Belongs to the protein kinase superfamily. STE Ser/Thr protein kinase family. MAP kinase kinase kinase subfamily. As to quaternary structure, homodimer. Interacts (via SAM domain) with STE50 (via SAM domain). Interacts with PBS2 and SHO1.

The enzyme catalyses L-seryl-[protein] + ATP = O-phospho-L-seryl-[protein] + ADP + H(+). It catalyses the reaction L-threonyl-[protein] + ATP = O-phospho-L-threonyl-[protein] + ADP + H(+). Functionally, serine/threonine protein kinase required for cell-type-specific transcription and signal transduction in yeast. It is thought that it phosphorylates the STE7 protein kinase which itself, phosphorylates the FUS3 and or KSS1 kinases. This chain is Serine/threonine-protein kinase STE11 (STE11), found in Saccharomyces cerevisiae (strain ATCC 204508 / S288c) (Baker's yeast).